The sequence spans 343 residues: Heat-inducible transcription repressor HrcA (343 aa).

Belongs to the HrcA family.

Negative regulator of class I heat shock genes (grpE-dnaK-dnaJ and groELS operons). Prevents heat-shock induction of these operons. This Natranaerobius thermophilus (strain ATCC BAA-1301 / DSM 18059 / JW/NM-WN-LF) protein is Heat-inducible transcription repressor HrcA.